Reading from the N-terminus, the 156-residue chain is Transcription elongation factor GreA (156 aa).

Positions 2–27 form a coiled coil; sequence EKTFPMTKEGLDKLKAELENLKLVKR.

Belongs to the GreA/GreB family.

Necessary for efficient RNA polymerase transcription elongation past template-encoded arresting sites. The arresting sites in DNA have the property of trapping a certain fraction of elongating RNA polymerases that pass through, resulting in locked ternary complexes. Cleavage of the nascent transcript by cleavage factors such as GreA or GreB allows the resumption of elongation from the new 3'terminus. GreA releases sequences of 2 to 3 nucleotides. This chain is Transcription elongation factor GreA, found in Lactococcus lactis subsp. cremoris (strain MG1363).